The following is a 308-amino-acid chain: CAAX prenyl protease 2 (308 aa).

At alanine 2 the chain carries N-acetylalanine. Helical transmembrane passes span 25-45 (ALSS…CFSL), 75-95 (VLVV…LTGI), and 112-132 (IFPA…GPLM). Residue glutamate 175 is the Proton donor/acceptor of the active site. The chain crosses the membrane as a helical span at residues 186–206 (MLAPCTGLGPAVFTCPLFFGV). The active-site Proton donor/acceptor is histidine 208. 2 helical membrane passes run 233–253 (LIGP…AVCA) and 262–282 (PLLA…QPLT).

Belongs to the peptidase U48 family. Ubiquitinated. Undergoes 'Lys-48'- and 'Lys-63'-linked ubiquitination. 'Lys-48' ubiquitination induces its degradation. Deubiquitinated by USP17L2/USP17 that cleaves 'Lys-63'-linked ubiquitin chains.

It is found in the endoplasmic reticulum membrane. It catalyses the reaction Hydrolyzes the peptide bond -P2-(S-farnesyl or geranylgeranyl)C-P1'-P2'-P3'-COOH where P1' and P2' are amino acids with aliphatic sidechains and P3' is any C-terminal residue.. With respect to regulation, deubiquitination by USP17L2/USP17 negatively regulates the proteolytic activity toward Ras GTPases. Protease involved in the processing of a variety of prenylated proteins containing the C-terminal CAAX motif, where C is a cysteine modified with an isoprenoid lipid, A is an aliphatic amino acid and X is any C-terminal amino acid. Proteolytically removes the C-terminal three residues of farnesylated and geranylated proteins, leaving the prenylated cysteine as the new C-terminus. Is able to process K-Ras, N-Ras, H-Ras, RAP1B and G-gamma-1. In Rattus norvegicus (Rat), this protein is CAAX prenyl protease 2 (Rce1).